We begin with the raw amino-acid sequence, 313 residues long: Small ribosomal subunit protein uS2 (313 aa).

A compositionally biased stretch (basic and acidic residues) spans 233–256; sequence RTMTDKQSDVAKEAKADGKEEAPK. A disordered region spans residues 233 to 293; sequence RTMTDKQSDV…SRKLVAAGTA (61 aa).

It belongs to the universal ribosomal protein uS2 family.

This chain is Small ribosomal subunit protein uS2, found in Bdellovibrio bacteriovorus (strain ATCC 15356 / DSM 50701 / NCIMB 9529 / HD100).